A 355-amino-acid chain; its full sequence is MLKVESNWAQACDTCRSAACTVYCRADSAYLCSSCDAQVHAANRLASRHERVRVCQSCERAPAAFFCKADAASLCTTCDSEIHSANPLARRHQRVPILPISEYSYSSTATNHSCETTVTDPENRLVLGQEEEDEDEAEAASWLLPNSGKNSGNNNGFSIGDEFLNLVDYSSSDKQFTDQSNQYQLDCNVPQRSYGEDGVVPLQIEVSKGMYQEQQNFQLSINCGSWGALRSSNGSLSHMVNVSSMDLGVVPESTTSDATVSNPRSPKAVTDQPPYPPAQMLSPRDREARVLRYREKKKMRKFEKTIRYASRKAYAEKRPRIKGRFAKKKDVDEEANQAFSTMITFDTGYGIVPSF.

Zn(2+) contacts are provided by Cys12, Cys15, Cys35, His40, Cys55, Cys58, Cys78, and His83. The segment at 12 to 54 adopts a B box-type 1; atypical zinc-finger fold; that stretch reads CDTCRSAACTVYCRADSAYLCSSCDAQVHAANRLASRHERVRV. The segment at 55–97 adopts a B box-type 2; atypical zinc-finger fold; that stretch reads CQSCERAPAAFFCKADAASLCTTCDSEIHSANPLARRHQRVPI. The span at 252 to 264 shows a compositional bias: polar residues; it reads ESTTSDATVSNPR. A disordered region spans residues 252-281; sequence ESTTSDATVSNPRSPKAVTDQPPYPPAQML. The CCT domain maps to 286–328; it reads REARVLRYREKKKMRKFEKTIRYASRKAYAEKRPRIKGRFAKK.

This sequence belongs to the CONSTANS family. As to expression, highly expressed in leaves and at lower levels in stems, flowers and siliques. Not detected in roots.

Its subcellular location is the nucleus. Functionally, putative transcription factor that may be involved in the light input to the circadian clock but does not affect flowering time. This chain is Zinc finger protein CONSTANS-LIKE 1 (COL1), found in Arabidopsis thaliana (Mouse-ear cress).